The sequence spans 1911 residues: Adenylate kinase 9 (1911 aa).

An adenylate kinase 1 region spans residues 31–285; that stretch reads VCFVVFGKPG…LFMIVMDRLK (255 aa). ATP is bound at residue 40–45; the sequence is GVGKTT. The segment at 60–89 is NMP 1; that stretch reads EALPILEEQIAAETESGVMLQSMLISGQSI. Residues 87 to 89 and 116 to 119 each bind AMP; these read QSI and EIPS. The interval 160-205 is LID 1; the sequence is GQRQHNNTGYIYSRDQWDPEVIENHRKKKKEAQKDGKGEEEEEEEE. The disordered stretch occupies residues 185 to 210; sequence RKKKKEAQKDGKGEEEEEEEEQEEEE. Acidic residues predominate over residues 197–210; the sequence is GEEEEEEEEQEEEE. Arginine 229 serves as a coordination point for AMP. Coiled coils occupy residues 443 to 485 and 676 to 711; these read AEAT…EFGV and LQKK…TEEE. 2 disordered regions span residues 728–796 and 892–926; these read KAKE…TEIP and DYEE…KERK. Acidic residues predominate over residues 733-750; it reads EETDNEDEEEIEGDELEV. The span at 751–761 shows a compositional bias: basic and acidic residues; it reads HEEPEASHDTR. Acidic residues-rich tracts occupy residues 767–791 and 892–919; these read EEFE…ETTV and DYEE…EEGE. Adenylate kinase stretches follow at residues 992–1203 and 1412–1601; these read LRIC…ELIL and IRII…KNVQ. 1001–1006 lines the ATP pocket; it reads GSGKTM. The NMP 2 stretch occupies residues 1021 to 1052; it reads QFEEVLQEKLLLKTEKKVGPEFEEDSENEQAA. AMP-binding positions include 1050–1052 and 1079–1082; these read QAA and VQLT. The tract at residues 1124–1144 is LID 2; sequence DGFPRYPEEAQFLGDRGFFPD. An ATP-binding site is contributed by 1421–1426; that stretch reads KSGKTT. Residues 1441-1472 form an NMP 3 region; that stretch reads SIGGALRYVLNNHPETELALMLNWHLHKGMTA. AMP-binding positions include arginine 1447, 1470-1472, 1499-1502, glutamine 1506, and arginine 1543; these read MTA and GYPV. The interval 1536 to 1550 is LID 3; that stretch reads LEKENEQRLPYPLHN.

Belongs to the adenylate kinase family.

Its subcellular location is the cytoplasm. It localises to the nucleus. It is found in the cell projection. The protein resides in the cilium. The protein localises to the flagellum. The enzyme catalyses a ribonucleoside 5'-phosphate + ATP = a ribonucleoside 5'-diphosphate + ADP. The catalysed reaction is AMP + ATP = 2 ADP. It carries out the reaction GTP + AMP = GDP + ADP. It catalyses the reaction CMP + ATP = CDP + ADP. The enzyme catalyses GTP + CMP = CDP + GDP. The catalysed reaction is dAMP + ATP = dADP + ADP. It carries out the reaction dCMP + ATP = dCDP + ADP. It catalyses the reaction a ribonucleoside 5'-diphosphate + ATP = a ribonucleoside 5'-triphosphate + ADP. The enzyme catalyses CDP + ATP = CTP + ADP. The catalysed reaction is CDP + GTP = CTP + GDP. It carries out the reaction GDP + ATP = GTP + ADP. It catalyses the reaction UDP + ATP = UTP + ADP. The enzyme catalyses GTP + UDP = UTP + GDP. The catalysed reaction is dTDP + GTP = dTTP + GDP. It carries out the reaction dCDP + ATP = dCTP + ADP. It catalyses the reaction dCDP + GTP = dCTP + GDP. The enzyme catalyses dGDP + ATP = dGTP + ADP. The catalysed reaction is dTDP + ATP = dTTP + ADP. It carries out the reaction dADP + GTP = dATP + GDP. Its function is as follows. Broad-specificity nucleoside phosphate kinase involved in cellular nucleotide homeostasis by catalyzing nucleoside-phosphate interconversions. Similar to other adenylate kinases, preferentially catalyzes the phosphorylation of the nucleoside monophosphate AMP with ATP as phosphate donor to produce ADP. In vitro, can also catalyze the phosphorylation of CMP, dAMP and dCMP and use GTP as an alternate phosphate donor. Moreover, exhibits a diphosphate kinase activity, producing ATP, CTP, GTP, UTP, TTP, dATP, dCTP and dGTP from the corresponding diphosphate substrates with either ATP or GTP as phosphate donors. For this activity shows the following substrate preference CDP &gt; UDP &gt; ADP &gt; TDP. The chain is Adenylate kinase 9 from Homo sapiens (Human).